The primary structure comprises 360 residues: DNA replication and repair protein RecF (360 aa).

30-37 is a binding site for ATP; the sequence is GENGAGKT.

This sequence belongs to the RecF family.

It localises to the cytoplasm. Functionally, the RecF protein is involved in DNA metabolism; it is required for DNA replication and normal SOS inducibility. RecF binds preferentially to single-stranded, linear DNA. It also seems to bind ATP. This is DNA replication and repair protein RecF from Deinococcus deserti (strain DSM 17065 / CIP 109153 / LMG 22923 / VCD115).